Reading from the N-terminus, the 416-residue chain is CinA-like protein (416 aa).

This sequence belongs to the CinA family.

This chain is CinA-like protein, found in Solibacter usitatus (strain Ellin6076).